We begin with the raw amino-acid sequence, 66 residues long: Large ribosomal subunit protein bL35 (66 aa).

A compositionally biased stretch (basic residues) spans 1-26 (MPKMKTHRGAAKRVKRTGSGKLKRSR). The interval 1–49 (MPKMKTHRGAAKRVKRTGSGKLKRSRAFTSHLFANKSTKQKRKLRKASL) is disordered.

Belongs to the bacterial ribosomal protein bL35 family.

In Staphylococcus saprophyticus subsp. saprophyticus (strain ATCC 15305 / DSM 20229 / NCIMB 8711 / NCTC 7292 / S-41), this protein is Large ribosomal subunit protein bL35.